We begin with the raw amino-acid sequence, 1951 residues long: [F-actin]-monooxygenase MICAL2 (1951 aa).

The interval 2 to 494 (GENEDEKQAQ…KHLYITKEMD (493 aa)) is monooxygenase domain. FAD is bound by residues C97, 116-118 (EKR), 123-125 (RNN), F183, Y298, and D398. The 104-residue stretch at 516–619 (DIRPNKLLTW…MVMYLSKFYE (104 aa)) folds into the Calponin-homology (CH) domain. S631 carries the post-translational modification Phosphoserine. A Nuclear localization signal motif is present at residues 660–681 (RKRTPRVDTQTEENDMNKRRRQ). 2 disordered regions span residues 663-712 (TPRV…SQNK) and 891-921 (KRVP…AADS). Positions 691–700 (SFSSRSLGSS) are enriched in low complexity. The span at 896–909 (AHPPSPPSCLPSPH) shows a compositional bias: pro residues. Residues 910-921 (PAAASSPPAADS) are compositionally biased toward low complexity. An LIM zinc-binding domain is found at 991-1053 (DTCYFCKKRV…KPHFVHCKTS (63 aa)). Positions 993, 996, 1014, 1017, 1020, 1023, 1043, and 1046 each coordinate Zn(2+). Residue T1052 is modified to Phosphoserine. Disordered regions lie at residues 1054 to 1141 (SKQR…RISP), 1158 to 1314 (TSED…VSPT), 1348 to 1368 (VEPG…EGCQ), 1383 to 1427 (ILGK…RKLG), 1451 to 1476 (HKTG…TCSS), 1489 to 1580 (QKKA…AKKA), 1594 to 1624 (AQAS…STTP), 1678 to 1697 (GDFF…VPSL), 1706 to 1731 (STSM…GEGG), and 1747 to 1766 (PVTE…EADS). Over residues 1061–1070 (AELNQQREEE) the composition is skewed to basic and acidic residues. Composition is skewed to polar residues over residues 1129–1138 (PRPSEWTSVR), 1228–1239 (HSLQSPTPSKYQ), and 1246–1256 (QSNSTPMNQRA). The segment covering 1257 to 1268 (PSPPKEPPPPPS) has biased composition (pro residues). Residues 1269-1285 (LSSSSSLPSSFSSASVP) show a composition bias toward low complexity. Over residues 1291-1306 (DSSSPQVTYNLHSPQI) the composition is skewed to polar residues. The segment at 1314–1353 (TPIYLRRARAQGIVKEIPLYLPHSPMLESTEDCLVEPGRE) is interaction with MAPK1. Basic and acidic residues predominate over residues 1350 to 1359 (PGRESLRSPE). The segment covering 1532–1545 (EAGKKTSPKPESKT) has biased composition (basic and acidic residues). Low complexity predominate over residues 1599–1616 (LSLPNSILRSRSLPSRPS). A compositionally biased stretch (basic and acidic residues) spans 1678-1688 (GDFFNSPKEEG). S1683 carries the phosphoserine modification. The span at 1706-1720 (STSMGQVAHPSSTGQ) shows a compositional bias: polar residues. Over residues 1749 to 1759 (TEATSSPTSSS) the composition is skewed to low complexity. Positions 1789 to 1939 (KQEELKRLHK…ERTQDQHFEN (151 aa)) constitute a bMERB domain.

The protein belongs to the Mical family. As to quaternary structure, interacts with PLXNA4. Interacts with RAB1B. Interacts with MAPK1/ERK2. Interacts with RAB1B, RAB35, RAB8A, RAB10, RAB13 and RAB15 (in their GTP-bound forms); binding to RAB1B and RAB35 is of low affinity compared to other Rab proteins; binding to RAB1B and RAB35 is of low affinity compared to other Rab proteins; at least in case of RAB8A may bind 2 molecules of RAB8A simultaneously through a high and a low affinity binding site, respectively. It depends on FAD as a cofactor. As to expression, expressed only in testis (at protein level).

The protein resides in the cytoplasm. Its subcellular location is the nucleus. The enzyme catalyses L-methionyl-[F-actin] + NADPH + O2 + H(+) = L-methionyl-(R)-S-oxide-[F-actin] + NADP(+) + H2O. Its function is as follows. Methionine monooxygenase that promotes depolymerization of F-actin by mediating oxidation of residues 'Met-44' and 'Met-47' on actin to form methionine-sulfoxide, resulting in actin filament disassembly and preventing repolymerization. Regulates the disassembly of branched actin networks also by oxidizing ARP3B-containing ARP2/3 complexes leading to ARP3B dissociation from the network. Acts as a key regulator of the SRF signaling pathway elicited by nerve growth factor and serum: mediates oxidation and subsequent depolymerization of nuclear actin, leading to increase MKL1/MRTF-A presence in the nucleus and promote SRF:MKL1/MRTF-A-dependent gene transcription. Does not activate SRF:MKL1/MRTF-A through RhoA. This Mus musculus (Mouse) protein is [F-actin]-monooxygenase MICAL2.